The sequence spans 333 residues: Heat shock transcription factor, X-linked member 4 (333 aa).

The tract at residues 1–66 (MASQNTEQEY…QDNSPPEDRN (66 aa)) is disordered. Over residues 29–39 (GSSPDPNPDSS) the composition is skewed to low complexity. Residues 49 to 60 (AMSQDPGSQDNS) are compositionally biased toward polar residues. Residues 79–182 (FRLSFPRKLW…PRLLENIQRK (104 aa)) mediate DNA binding. The interval 227-275 (QGAPSVQGPSGTQSFRRSGMWSKKSATRHPLGNGPPQEPNGPSWEGTSG) is disordered. A compositionally biased stretch (polar residues) spans 228–242 (GAPSVQGPSGTQSFR).

This sequence belongs to the HSF family.

Its subcellular location is the nucleus. The sequence is that of Heat shock transcription factor, X-linked member 4 from Homo sapiens (Human).